Here is a 368-residue protein sequence, read N- to C-terminus: Glutaminyl-peptide cyclotransferase (368 aa).

An N-terminal signal peptide occupies residues M1 to A23. N-linked (GlcNAc...) asparagine glycosylation occurs at N53. The cysteines at positions 143 and 169 are disulfide-linked. D164 lines the Zn(2+) pocket. Catalysis depends on E207, which acts as the Proton acceptor. E208 lines the Zn(2+) pocket. Residue D254 is the Proton acceptor of the active site. A glycan (N-linked (GlcNAc...) asparagine) is linked at N292. Residue H336 participates in Zn(2+) binding. A glycan (N-linked (GlcNAc...) asparagine) is linked at N352.

The protein belongs to the glutaminyl-peptide cyclotransferase family. Expressed by the venom gland.

The protein localises to the secreted. The enzyme catalyses N-terminal L-glutaminyl-[peptide] = N-terminal 5-oxo-L-prolyl-[peptide] + NH4(+). In terms of biological role, responsible for the biosynthesis of pyroglutamyl peptides. Has a bias against acidic and tryptophan residues adjacent to the N-terminal glutaminyl residue and a lack of importance of chain length after the second residue. Also catalyzes N-terminal pyroglutamate formation. The sequence is that of Glutaminyl-peptide cyclotransferase (QPCT) from Boiga dendrophila (Mangrove snake).